Consider the following 423-residue polypeptide: Histidine--tRNA ligase (423 aa).

The protein belongs to the class-II aminoacyl-tRNA synthetase family.

Its subcellular location is the cytoplasm. The catalysed reaction is tRNA(His) + L-histidine + ATP = L-histidyl-tRNA(His) + AMP + diphosphate + H(+). The polypeptide is Histidine--tRNA ligase (Picrophilus torridus (strain ATCC 700027 / DSM 9790 / JCM 10055 / NBRC 100828 / KAW 2/3)).